A 249-amino-acid chain; its full sequence is Coproheme decarboxylase (249 aa).

Fe-coproporphyrin III contacts are provided by residues Arg-131, 145-149, His-172, and Gln-185; that span reads YPMNK. Residue Tyr-145 is part of the active site.

This sequence belongs to the ChdC family. Type 1 subfamily. It depends on Fe-coproporphyrin III as a cofactor.

It carries out the reaction Fe-coproporphyrin III + 2 H2O2 + 2 H(+) = heme b + 2 CO2 + 4 H2O. The enzyme catalyses Fe-coproporphyrin III + H2O2 + H(+) = harderoheme III + CO2 + 2 H2O. The catalysed reaction is harderoheme III + H2O2 + H(+) = heme b + CO2 + 2 H2O. It participates in porphyrin-containing compound metabolism; protoheme biosynthesis. Its function is as follows. Involved in coproporphyrin-dependent heme b biosynthesis. Catalyzes the decarboxylation of Fe-coproporphyrin III (coproheme) to heme b (protoheme IX), the last step of the pathway. The reaction occurs in a stepwise manner with a three-propionate intermediate. This Staphylococcus carnosus (strain TM300) protein is Coproheme decarboxylase.